The following is a 198-amino-acid chain: Segregation and condensation protein B (198 aa).

This sequence belongs to the ScpB family. In terms of assembly, homodimer. Homodimerization may be required to stabilize the binding of ScpA to the Smc head domains. Component of a cohesin-like complex composed of ScpA, ScpB and the Smc homodimer, in which ScpA and ScpB bind to the head domain of Smc. The presence of the three proteins is required for the association of the complex with DNA.

It localises to the cytoplasm. Participates in chromosomal partition during cell division. May act via the formation of a condensin-like complex containing Smc and ScpA that pull DNA away from mid-cell into both cell halves. The sequence is that of Segregation and condensation protein B from Streptococcus mutans serotype c (strain ATCC 700610 / UA159).